Here is a 353-residue protein sequence, read N- to C-terminus: Protein CEPU-1 (353 aa).

The signal sequence occupies residues 1–28; the sequence is MAQAKMQHPVSWVIFAGMAALLLFQGVP. 3 Ig-like C2-type domains span residues 37-124, 134-216, and 220-314; these read PKAM…PKTS, PKIT…VKVT, and PPYI…ETTT. N-linked (GlcNAc...) asparagine glycosylation is found at Asn42, Asn68, and Asn150. A disulfide bond links Cys55 and Cys113. 2 cysteine pairs are disulfide-bonded: Cys155–Cys199 and Cys241–Cys293. N-linked (GlcNAc...) asparagine glycosylation is found at Asn282, Asn290, and Asn303. A lipid anchor (GPI-anchor amidated serine) is attached at Ser330. Residues 331-353 constitute a propeptide, removed in mature form; sequence GAWRRGSCAWLLALPLAQLARQF.

This sequence belongs to the immunoglobulin superfamily. IgLON family. In terms of assembly, interacts with NEGR1. Found on the dendrites, somata and axons of developing Purkinje cells. Undetectable on other neurons like Golgi or granule cells.

It is found in the cell membrane. In terms of biological role, it may be a cellular address molecule specific to Purkinje cells. It may represent a receptor or a subunit of a receptor complex. In Gallus gallus (Chicken), this protein is Protein CEPU-1.